The chain runs to 350 residues: Glucose-6-phosphate 3-dehydrogenase (350 aa).

The protein belongs to the Gfo/Idh/MocA family.

The catalysed reaction is D-glucose 6-phosphate + NAD(+) = 3-dehydro-D-glucose 6-phosphate + NADH + H(+). It participates in antibiotic biosynthesis; kanosamine biosynthesis. Involved in the biosynthesis of kanosamine (3-amino-3-deoxy-D-glucose), which is known to have antibiotic and antifungal properties, and to be a precursor of the antibiotic neotrehalosadiamine (3,3'-diamino-3,3'-dideoxy-alpha,beta-trehalose (NTD)). Catalyzes the oxidation of glucose 6-phosphate to 3-oxo-D-glucose 6-phosphate. It can only use NAD. This is Glucose-6-phosphate 3-dehydrogenase (ntdC) from Bacillus subtilis (strain 168).